Consider the following 280-residue polypeptide: Protease HtpX (280 aa).

Helical transmembrane passes span 7-26 (TFIL…GLLG) and 30-49 (GMLV…YWYS). Residue histidine 129 coordinates Zn(2+). Glutamate 130 is an active-site residue. Residue histidine 133 coordinates Zn(2+). The next 2 membrane-spanning stretches (helical) occupy residues 146–166 (ATIA…SMFG) and 178–198 (VVGM…QMAI). Residue glutamate 203 coordinates Zn(2+).

It belongs to the peptidase M48B family. Zn(2+) is required as a cofactor.

Its subcellular location is the cell inner membrane. The sequence is that of Protease HtpX from Legionella pneumophila (strain Lens).